The primary structure comprises 246 residues: Ly6/PLAUR domain-containing protein 4 (246 aa).

An N-terminal signal peptide occupies residues 1-26; that stretch reads MILQAWRSLQLLYLLEAISLLPCTEA. N-linked (GlcNAc...) asparagine glycosylation is present at asparagine 117. In terms of domain architecture, UPAR/Ly6 spans 142 to 223; the sequence is CPSCVGKHDQ…INVLDKSEAV (82 aa). Alanine 225 carries GPI-anchor amidated alanine lipidation. The propeptide at 226–246 is removed in mature form; that stretch reads GHCSQGISWSVLLCLLILLRD.

It localises to the cell membrane. The chain is Ly6/PLAUR domain-containing protein 4 (Lypd4) from Mus musculus (Mouse).